Consider the following 465-residue polypeptide: Cruciform DNA-recognizing protein 1 (465 aa).

Disordered regions lie at residues 107-227 and 247-276; these read EAGG…VPNP and RLNK…ALPQ. Over residues 127-151 the composition is skewed to basic residues; that stretch reads NRKKNKRNNKKRRSKLKKKSTKNNK. Phosphoserine is present on residues Ser153 and Ser156. A compositionally biased stretch (acidic residues) spans 156–165; sequence SLDDNEEEDG. Positions 160–161 are X-DNA-binding; the sequence is NE. The segment covering 166 to 177 has biased composition (low complexity); that stretch reads VTGTTTEDVTGT. Phosphothreonine is present on Thr182. Ser271 is modified (phosphoserine). At Thr295 the chain carries Phosphothreonine. Residues 298 to 465 form a disordered region; sequence VEAVTPLINE…FFGKLKKLFK (168 aa). Residues Ser319 and Ser343 each carry the phosphoserine modification. Over residues 337-363 the composition is skewed to basic and acidic residues; it reads LVEKRESTEGVLDGSKKVENKAKKDEE. Thr366 is modified (phosphothreonine). Composition is skewed to basic and acidic residues over residues 385–398 and 404–428; these read AEGR…EEKE and EKGS…EVKK. Residue Ser394 is modified to Phosphoserine. Ser440 bears the Phosphoserine mark. The span at 451 to 465 shows a compositional bias: basic residues; the sequence is KKKTGFFGKLKKLFK.

Belongs to the CRP1/MDG1 family. In terms of processing, cleaved in the vicinity of position 160 to give an X-DNA-binding N-terminal subpeptide and a non-DNA-binding C-terminal subpeptide.

Cruciform DNA-binding protein which exerts an enhancing effect on the cleavage of cruciform DNA (X-DNA) by endonuclease VII from bacteriophage T4. The chain is Cruciform DNA-recognizing protein 1 (CRP1) from Saccharomyces cerevisiae (strain Lalvin EC1118 / Prise de mousse) (Baker's yeast).